Consider the following 382-residue polypeptide: uncharacterized protein (382 aa).

12 helical membrane-spanning segments follow: residues 14-34 (GLLLLTLAIAVLNTLVPLWLA), 45-65 (MVSSSYFTGNLVGTLFTGYLI), 75-95 (YLASLIFAAGCVGLGVMVGFW), 102-122 (FIAGIGCAMIWVVVESALMCS), 131-151 (LLAAYMMVYYVGTFLGQLLVS), 157-177 (LLHVLPWVTGMILAGILPLLF), 204-224 (LGVNGCIISGIVLGSLYGLMP), 235-255 (ASIGFWMAVLVSAGILGQWPV), 265-284 (LLVLRVQVFVVILGSIVMLT), 289-311 (APALFILGAAGFTLYPVAMAWAC), 325-345 (ALLLSYTVGSLLGPSFTAMLM), and 349-369 (SDNLLFLMIASVSFIYLLMLL).

Belongs to the major facilitator superfamily. YcaD (TC 2.A.1.26) family.

It localises to the cell inner membrane. This is an uncharacterized protein from Salmonella arizonae (strain ATCC BAA-731 / CDC346-86 / RSK2980).